Reading from the N-terminus, the 627-residue chain is (-)-alpha-pinene synthase 2, chloroplastic (627 aa).

A chloroplast-targeting transit peptide spans 1 to 36; sequence MALVSVAPMASRSCLHKSLSSSAHELKTICRTIPTL. 3 residues coordinate Mg(2+): Asp-378, Asp-382, and Asp-530. The short motif at 378-382 is the DDXXD motif element; that stretch reads DDMYD.

Belongs to the terpene synthase family. Tpsd subfamily. The cofactor is Mg(2+). Requires Mn(2+) as cofactor.

The protein resides in the plastid. Its subcellular location is the chloroplast. It carries out the reaction (2E)-geranyl diphosphate = (1S,5S)-alpha-pinene + diphosphate. The catalysed reaction is (2E)-geranyl diphosphate = (1S,5S)-beta-pinene + diphosphate. It participates in terpene metabolism; oleoresin biosynthesis. In terms of biological role, involved in defensive oleoresin formation in conifers in response to insect attack or other injury. Involved in monoterpene (C10) olefins biosynthesis. A mixture of alpha- and beta-pinene (35:10) is produced by this enzyme. In Picea sitchensis (Sitka spruce), this protein is (-)-alpha-pinene synthase 2, chloroplastic.